Reading from the N-terminus, the 821-residue chain is Ent-isokaur-15-ene synthase (821 aa).

Mg(2+)-binding residues include D556, D560, N701, T705, and E709. The DDXXD motif signature appears at 556 to 560; sequence DDFFD.

This sequence belongs to the terpene synthase family. The cofactor is Mg(2+).

It catalyses the reaction ent-copalyl diphosphate = ent-isokaurene + diphosphate. It functions in the pathway secondary metabolite biosynthesis; terpenoid biosynthesis. Its function is as follows. Involved in the biosynthesis of ent-kaurene diterpenoids natural products. Catalyzes the conversion of ent-copalyl diphosphate to the phytoalexin precursor ent-isokaur-15-ene. The chain is Ent-isokaur-15-ene synthase from Oryza sativa subsp. indica (Rice).